Consider the following 460-residue polypeptide: ATP synthase subunit beta (460 aa).

150–157 (GGAGVGKT) contacts ATP.

This sequence belongs to the ATPase alpha/beta chains family. In terms of assembly, F-type ATPases have 2 components, CF(1) - the catalytic core - and CF(0) - the membrane proton channel. CF(1) has five subunits: alpha(3), beta(3), gamma(1), delta(1), epsilon(1). CF(0) has three main subunits: a(1), b(2) and c(9-12). The alpha and beta chains form an alternating ring which encloses part of the gamma chain. CF(1) is attached to CF(0) by a central stalk formed by the gamma and epsilon chains, while a peripheral stalk is formed by the delta and b chains.

It is found in the cell inner membrane. It catalyses the reaction ATP + H2O + 4 H(+)(in) = ADP + phosphate + 5 H(+)(out). Produces ATP from ADP in the presence of a proton gradient across the membrane. The catalytic sites are hosted primarily by the beta subunits. The chain is ATP synthase subunit beta from Sodalis glossinidius (strain morsitans).